The primary structure comprises 225 residues: MEEVYASELRGREPETVDTLFLDNTQGGVIGGINEKLTKLELLSMVKCGLTTLKGMPVLPALNYLDLSDNELGDDASFDVLIKCAPEIKKITLSGNRLTLDNVRTLKMLPNLMELDLSNNSSLGLLDDYRVKMFEMIPSLKILDGCDVDGEEVEEEFAAGEGAEDSDEGDSDEDGPGLSYLNKSQFSDDETDDYVVPEAGDAETRGAKRAASADCDEPEAKKSAE.

LRR repeat units follow at residues 39–60, 61–82, and 87–107; these read KLELLSMVKCGLTTLKGMPVLP, ALNYLDLSDNELGDDASFDVLI, and EIKKITLSGNRLTLDNVRTLK. Residues 121-161 form the LRRCT domain; sequence SSLGLLDDYRVKMFEMIPSLKILDGCDVDGEEVEEEFAAGE. Positions 155-175 are enriched in acidic residues; sequence EEFAAGEGAEDSDEGDSDEDG. A disordered region spans residues 155–225; the sequence is EEFAAGEGAE…DEPEAKKSAE (71 aa).

This sequence belongs to the ANP32 family.

The sequence is that of Acidic leucine-rich nuclear phosphoprotein 32-related protein 2 from Caenorhabditis elegans.